The sequence spans 269 residues: Tryptophan synthase alpha chain (269 aa).

Catalysis depends on proton acceptor residues Glu-49 and Asp-60.

Belongs to the TrpA family. In terms of assembly, tetramer of two alpha and two beta chains.

The catalysed reaction is (1S,2R)-1-C-(indol-3-yl)glycerol 3-phosphate + L-serine = D-glyceraldehyde 3-phosphate + L-tryptophan + H2O. The protein operates within amino-acid biosynthesis; L-tryptophan biosynthesis; L-tryptophan from chorismate: step 5/5. The alpha subunit is responsible for the aldol cleavage of indoleglycerol phosphate to indole and glyceraldehyde 3-phosphate. The chain is Tryptophan synthase alpha chain from Pseudomonas putida (strain GB-1).